The primary structure comprises 378 residues: Spermatogenic leucine zipper protein 1 (378 aa).

The tract at residues 1-31 (MSDTDNSAEMPARCPSPNPAPGAKQEPPNSG) is disordered. Serine 106 is subject to Phosphoserine. The tract at residues 116–122 (KNKIRFK) is interaction with PPP1CC isoform gamma-2. Residues 116-127 (KNKIRFKDDLFI) are helix-loop-helix motif. Positions 128-193 (HFDPEREQNT…HLRGEYRKLR (66 aa)) are basic motif. A coiled-coil region spans residues 182 to 233 (SLHLRGEYRKLRNNMEQLLQEADHWSKQHNELSELMRSYQECQNETQETTDK). Serine 207 carries the post-translational modification Phosphoserine. The interval 252 to 273 (LEEQVKKLSHDTHALHLIAALL) is leucine-zipper.

As to quaternary structure, interacts with PPP1CC isoform gamma-2. This interaction can prevent SPZ1 binding to the E-box and inhibits PPP1CC activity. In terms of processing, phosphorylated by MAPK1/ERK2 and MAPK3/ERK1. Expressed specifically in the testis and epidydimis. In the testis expressed in both germ cells and somatic cells (Sertoli and Leydig cells). Expressed in several tumor cell lines.

The protein localises to the cytoplasm. It localises to the nucleus. Functionally, transcription factor that binds to the DNA sequence 5'-CANNTG-3'(E box) and the G-box motif. Directly binds to a guanine-rich region of the PCNA promoter and up-regulates its expression which in turn induces cell transformation and tumor formation. May play an important role in the regulation of cell proliferation and differentiation during spermatogenesis. The sequence is that of Spermatogenic leucine zipper protein 1 (Spz1) from Mus musculus (Mouse).